The sequence spans 269 residues: Chymotrypsin-like elastase family member 3B (269 aa).

The N-terminal stretch at methionine 1–glycine 16 is a signal peptide. A propeptide spans cysteine 17–arginine 27 (activation peptide). One can recognise a Peptidase S1 domain in the interval valine 28 to alanine 267. The cysteines at positions 57 and 73 are disulfide-linked. Residues histidine 72 and aspartate 122 each act as charge relay system in the active site. 3 cysteine pairs are disulfide-bonded: cysteine 156/cysteine 222, cysteine 187/cysteine 203, and cysteine 212/cysteine 243. The Charge relay system role is filled by serine 216.

Belongs to the peptidase S1 family. Elastase subfamily.

It carries out the reaction Preferential cleavage: Ala-|-Xaa. Does not hydrolyze elastin.. Functionally, efficient protease with alanine specificity but only little elastolytic activity. In Mus musculus (Mouse), this protein is Chymotrypsin-like elastase family member 3B (Cela3b).